The primary structure comprises 367 residues: MKNEYLLLTPGPLSTSETVREAMLKDWCTWDDEYNKDIVEVIRTKLVKLATKHSGYTSVLMQGCGTASVEATIGSAIGKEGKLLVVDNGAYGARIAQIADYLNIPCHVVSPGETSQPHLNEVETALASDPAITHVAIVHCETTTGMLNPIEAFASAAKAHGKVVILDAMSSFGGIPMDIADLGIDFMISSANKCIQGVPGFGFVIAKQTELEKCQDQARSLSLDLYDQWHCMEVNHGKWRFTSPTHTVRAFYQALLELEQEGGIEARHNRYQTNQKTLVAGMRSLGFEPLLSDDLHSPIITSFYSPTHSDYQFKAFYTRLKEQGFVIYPGKVSNADCFRIGNIGEVYPADIERLIGAIEKAMYWQVA.

Lys-193 carries the post-translational modification N6-(pyridoxal phosphate)lysine.

The protein belongs to the class-V pyridoxal-phosphate-dependent aminotransferase family. PhnW subfamily. In terms of assembly, homodimer. Pyridoxal 5'-phosphate is required as a cofactor.

It carries out the reaction (2-aminoethyl)phosphonate + pyruvate = phosphonoacetaldehyde + L-alanine. Functionally, involved in phosphonate degradation. The sequence is that of 2-aminoethylphosphonate--pyruvate transaminase from Vibrio parahaemolyticus serotype O3:K6 (strain RIMD 2210633).